A 695-amino-acid polypeptide reads, in one-letter code: FMR1-interacting protein NUFIP2 (695 aa).

Residues 1-100 (MEEKPGQPQP…KTGYGELNGN (100 aa)) are disordered. Basic residues-rich tracts occupy residues 11-23 (QHHHSHHHPHHHP) and 30-53 (PHHHHHYYFYNHSHNHHHHHHHQQ). Residue Lys-78 forms a Glycyl lysine isopeptide (Lys-Gly) (interchain with G-Cter in SUMO2) linkage. Position 87 is a phosphothreonine (Thr-87). Residue Lys-109 forms a Glycyl lysine isopeptide (Lys-Gly) (interchain with G-Cter in SUMO2) linkage. A phosphoserine mark is found at Ser-112 and Ser-113. Glycyl lysine isopeptide (Lys-Gly) (interchain with G-Cter in SUMO2) cross-links involve residues Lys-136, Lys-146, Lys-157, and Lys-171. 4 disordered regions span residues 155–189 (IQKNSMDKKNGKSYENKSGENQSVDKSDTIPIPNG), 204–234 (GKGADNDGSGSESGYTTPKKRKARRNSAKGC), 261–341 (FKPD…KPPP), and 369–402 (TIQNSSVSPTSSSSSSSSTGETQTQSSSRLSQVP). The span at 159–182 (SMDKKNGKSYENKSGENQSVDKSD) shows a compositional bias: basic and acidic residues. Residues Ser-212 and Ser-214 each carry the phosphoserine modification. At Tyr-218 the chain carries Phosphotyrosine. A phosphothreonine mark is found at Thr-219 and Thr-220. The segment covering 221 to 230 (PKKRKARRNS) has biased composition (basic residues). Positions 261–275 (FKPDYSEQKGNRVDG) are enriched in basic and acidic residues. Glycyl lysine isopeptide (Lys-Gly) (interchain with G-Cter in SUMO2) cross-links involve residues Lys-262 and Lys-281. An Omega-N-methylarginine modification is found at Arg-291. Lys-293 is covalently cross-linked (Glycyl lysine isopeptide (Lys-Gly) (interchain with G-Cter in SUMO2)). Ser-304 is subject to Phosphoserine. Residue Lys-307 forms a Glycyl lysine isopeptide (Lys-Gly) (interchain with G-Cter in SUMO2) linkage. The segment covering 373-396 (SSVSPTSSSSSSSSTGETQTQSSS) has biased composition (low complexity). Ser-376 is subject to Phosphoserine. The residue at position 571 (Thr-571) is a Phosphothreonine. A phosphoserine mark is found at Ser-572, Ser-592, Ser-608, and Ser-629. Thr-633 carries the post-translational modification Phosphothreonine. Phosphoserine occurs at positions 637, 652, 655, and 692.

In terms of assembly, interacts with FMR1 (via N-terminus). Interacts with DDX6.

The protein resides in the nucleus. The protein localises to the cytoplasm. It localises to the stress granule. Binds RNA. In Homo sapiens (Human), this protein is FMR1-interacting protein NUFIP2.